The primary structure comprises 423 residues: Probable histone-binding protein rbbD (423 aa).

WD repeat units lie at residues 119-159 (NHEG…LEPT), 172-212 (GHKK…KSDS), 222-262 (GHTS…KPIH), 266-306 (AHNS…NRLH), 310-350 (SHTD…EEQN), and 367-407 (GHTS…YNDR).

This sequence belongs to the WD repeat RBAP46/RBAP48/MSI1 family. As to quaternary structure, probably binds directly to helix 1 of the histone fold of histone H4, a region that is not accessible when H4 is in chromatin.

It is found in the nucleus. Its function is as follows. Core histone-binding subunit that may target chromatin assembly factors, chromatin remodeling factors and histone deacetylases to their histone substrates in a manner that is regulated by nucleosomal DNA. Component of several complexes which regulate chromatin metabolism. This Dictyostelium discoideum (Social amoeba) protein is Probable histone-binding protein rbbD (rbbD).